A 290-amino-acid polypeptide reads, in one-letter code: Nitrogenase iron protein 1 (290 aa).

An ATP-binding site is contributed by 10 to 17 (GKGGIGKS). Residue Cys98 participates in [4Fe-4S] cluster binding. Arg101 carries the ADP-ribosylarginine; by dinitrogenase reductase ADP-ribosyltransferase modification. Residue Cys133 participates in [4Fe-4S] cluster binding.

The protein belongs to the NifH/BchL/ChlL family. Homodimer. [4Fe-4S] cluster serves as cofactor. The reversible ADP-ribosylation of Arg-101 inactivates the nitrogenase reductase and regulates nitrogenase activity.

The catalysed reaction is N2 + 8 reduced [2Fe-2S]-[ferredoxin] + 16 ATP + 16 H2O = H2 + 8 oxidized [2Fe-2S]-[ferredoxin] + 2 NH4(+) + 16 ADP + 16 phosphate + 6 H(+). With respect to regulation, nitrogenase holoenzyme is subject to 'conformational protection' by FeSII; under oxidizing conditions FeSII binds to the holoenzyme and reversibly protects it from oxidation. Functionally, the key enzymatic reactions in nitrogen fixation are catalyzed by the nitrogenase complex, which has 2 components: the iron protein (component 2) and a component 1 which is either a molybdenum-iron protein, a vanadium-iron, or an iron-iron protein. The protein is Nitrogenase iron protein 1 (nifH1) of Azotobacter vinelandii.